Here is a 131-residue protein sequence, read N- to C-terminus: Aspartate 1-decarboxylase (131 aa).

Ser-25 (schiff-base intermediate with substrate; via pyruvic acid) is an active-site residue. Ser-25 carries the pyruvic acid (Ser) modification. Residue Thr-57 participates in substrate binding. Catalysis depends on Tyr-58, which acts as the Proton donor. 73–75 (GAA) is a binding site for substrate. The interval 112 to 131 (NVPTTQKSENPGQGSLRNAI) is disordered. The span at 113–131 (VPTTQKSENPGQGSLRNAI) shows a compositional bias: polar residues.

The protein belongs to the PanD family. Heterooctamer of four alpha and four beta subunits. The cofactor is pyruvate. Is synthesized initially as an inactive proenzyme, which is activated by self-cleavage at a specific serine bond to produce a beta-subunit with a hydroxyl group at its C-terminus and an alpha-subunit with a pyruvoyl group at its N-terminus.

The protein resides in the cytoplasm. The enzyme catalyses L-aspartate + H(+) = beta-alanine + CO2. It participates in cofactor biosynthesis; (R)-pantothenate biosynthesis; beta-alanine from L-aspartate: step 1/1. Functionally, catalyzes the pyruvoyl-dependent decarboxylation of aspartate to produce beta-alanine. The sequence is that of Aspartate 1-decarboxylase from Syntrophotalea carbinolica (strain DSM 2380 / NBRC 103641 / GraBd1) (Pelobacter carbinolicus).